Reading from the N-terminus, the 173-residue chain is Crossover junction endodeoxyribonuclease RuvC (173 aa).

Catalysis depends on residues D8, E67, and D139. Mg(2+) is bound by residues D8, E67, and D139.

The protein belongs to the RuvC family. In terms of assembly, homodimer which binds Holliday junction (HJ) DNA. The HJ becomes 2-fold symmetrical on binding to RuvC with unstacked arms; it has a different conformation from HJ DNA in complex with RuvA. In the full resolvosome a probable DNA-RuvA(4)-RuvB(12)-RuvC(2) complex forms which resolves the HJ. Mg(2+) is required as a cofactor.

Its subcellular location is the cytoplasm. It catalyses the reaction Endonucleolytic cleavage at a junction such as a reciprocal single-stranded crossover between two homologous DNA duplexes (Holliday junction).. The RuvA-RuvB-RuvC complex processes Holliday junction (HJ) DNA during genetic recombination and DNA repair. Endonuclease that resolves HJ intermediates. Cleaves cruciform DNA by making single-stranded nicks across the HJ at symmetrical positions within the homologous arms, yielding a 5'-phosphate and a 3'-hydroxyl group; requires a central core of homology in the junction. The consensus cleavage sequence is 5'-(A/T)TT(C/G)-3'. Cleavage occurs on the 3'-side of the TT dinucleotide at the point of strand exchange. HJ branch migration catalyzed by RuvA-RuvB allows RuvC to scan DNA until it finds its consensus sequence, where it cleaves and resolves the cruciform DNA. The chain is Crossover junction endodeoxyribonuclease RuvC from Shewanella sp. (strain ANA-3).